Reading from the N-terminus, the 320-residue chain is 7-acetyl-epi-neemfruitin B aldo-keto reductase (320 aa).

Position 51 (aspartate 51) interacts with NADP(+). Catalysis depends on tyrosine 56, which acts as the Proton donor. NADP(+) is bound by residues glutamine 186 and 264 to 272 (FNKQRMEEN).

Belongs to the aldo/keto reductase family. Mainly expressed in petioles and, to a lower extent, in roots.

It catalyses the reaction 7-acetyl-epi-neemfruitin B + AH2 + H2O = (1S,3bR,4R,5aR,9aR,9bR,11aS)-1-[(4R)-5-[(2S)-3,3-dimethyloxiran-2-yl]-1,4-dihydroxybutan-2-yl]-3b,6,6,9a,11a-pentamethyl-7-oxo-1H,2H,3bH,4H,5H,5aH,6H,7H,9aH,9bH,10H,11H,11aH-cyclopenta[a]phenanthren-4-yl acetate + acetate + A + H(+). It participates in secondary metabolite biosynthesis; terpenoid biosynthesis. Functionally, aldo-keto reductase involved in the biosynthesis of limonoids triterpene natural products such as azadirachtin, an antifeedant widely used as bioinsecticide, and possessing many medicinal applications including anti-tumoral, anti-malarial, anti-rheumatic, antibacterial, anti-inflammatory, anti-pyretic and diuretic effects. Can use 7-acetyl-epi-neemfruitin B as substrate. In Melia azedarach (Chinaberry tree), this protein is 7-acetyl-epi-neemfruitin B aldo-keto reductase.